The following is a 261-amino-acid chain: Cytochrome c oxidase subunit 3 (261 aa).

Residues 1–15 (MAHQAHAYHMVDPSP) are Mitochondrial matrix-facing. A helical transmembrane segment spans residues 16 to 34 (WPLTGAVAALLLTSGLAIW). Over 35-40 (FPFNSL) the chain is Mitochondrial intermembrane. Residues 41 to 66 (ILLTLGLVLLLLTMYQWWRDIVREGT) traverse the membrane as a helical segment. Residues 67–72 (FQGHHT) are Mitochondrial matrix-facing. Residues 73–105 (PPVQKGLRYGMILFITSEVFFFLGFFWAFYHSS) traverse the membrane as a helical segment. Over 106–128 (LAPTPELGGCWPPTGIVPLNPFE) the chain is Mitochondrial intermembrane. A helical membrane pass occupies residues 129 to 152 (VPLLNTAVLLASGVTVTWAHHSIM). At 153–155 (EGE) the chain is on the mitochondrial matrix side. A helical transmembrane segment spans residues 156–183 (RKQAIHSLTLTILLGFYFTFLQAMEYYE). The Mitochondrial intermembrane segment spans residues 184 to 190 (APFTIAD). Residues 191 to 223 (GVYGSTFFVATGFHGLHVIIGSTFLAICLLRQI) traverse the membrane as a helical segment. Residues 224–232 (RYHFTSEHH) lie on the Mitochondrial matrix side of the membrane. Residues 233-256 (FGFEAAAWYWHFVDVVWLFLYISI) traverse the membrane as a helical segment. Residues 257 to 261 (YWWGS) are Mitochondrial intermembrane-facing.

Belongs to the cytochrome c oxidase subunit 3 family. As to quaternary structure, component of the cytochrome c oxidase (complex IV, CIV), a multisubunit enzyme composed of 14 subunits. The complex is composed of a catalytic core of 3 subunits MT-CO1, MT-CO2 and MT-CO3, encoded in the mitochondrial DNA, and 11 supernumerary subunits COX4I, COX5A, COX5B, COX6A, COX6B, COX6C, COX7A, COX7B, COX7C, COX8 and NDUFA4, which are encoded in the nuclear genome. The complex exists as a monomer or a dimer and forms supercomplexes (SCs) in the inner mitochondrial membrane with NADH-ubiquinone oxidoreductase (complex I, CI) and ubiquinol-cytochrome c oxidoreductase (cytochrome b-c1 complex, complex III, CIII), resulting in different assemblies (supercomplex SCI(1)III(2)IV(1) and megacomplex MCI(2)III(2)IV(2)).

It is found in the mitochondrion inner membrane. It carries out the reaction 4 Fe(II)-[cytochrome c] + O2 + 8 H(+)(in) = 4 Fe(III)-[cytochrome c] + 2 H2O + 4 H(+)(out). In terms of biological role, component of the cytochrome c oxidase, the last enzyme in the mitochondrial electron transport chain which drives oxidative phosphorylation. The respiratory chain contains 3 multisubunit complexes succinate dehydrogenase (complex II, CII), ubiquinol-cytochrome c oxidoreductase (cytochrome b-c1 complex, complex III, CIII) and cytochrome c oxidase (complex IV, CIV), that cooperate to transfer electrons derived from NADH and succinate to molecular oxygen, creating an electrochemical gradient over the inner membrane that drives transmembrane transport and the ATP synthase. Cytochrome c oxidase is the component of the respiratory chain that catalyzes the reduction of oxygen to water. Electrons originating from reduced cytochrome c in the intermembrane space (IMS) are transferred via the dinuclear copper A center (CU(A)) of subunit 2 and heme A of subunit 1 to the active site in subunit 1, a binuclear center (BNC) formed by heme A3 and copper B (CU(B)). The BNC reduces molecular oxygen to 2 water molecules using 4 electrons from cytochrome c in the IMS and 4 protons from the mitochondrial matrix. The sequence is that of Cytochrome c oxidase subunit 3 (mt-co3) from Tetraodon nigroviridis (Spotted green pufferfish).